A 519-amino-acid chain; its full sequence is 2-isopropylmalate synthase (519 aa).

One can recognise a Pyruvate carboxyltransferase domain in the interval 5-267 (VIIFDTTLRD…QTRINHKEIY (263 aa)). Mn(2+) contacts are provided by aspartate 14, histidine 202, histidine 204, and asparagine 238. Residues 392–519 (VMNYFNTQSG…RKHHTTQEAV (128 aa)) form a regulatory domain region.

This sequence belongs to the alpha-IPM synthase/homocitrate synthase family. LeuA type 1 subfamily. In terms of assembly, homodimer. The cofactor is Mn(2+).

It localises to the cytoplasm. It carries out the reaction 3-methyl-2-oxobutanoate + acetyl-CoA + H2O = (2S)-2-isopropylmalate + CoA + H(+). It participates in amino-acid biosynthesis; L-leucine biosynthesis; L-leucine from 3-methyl-2-oxobutanoate: step 1/4. Functionally, catalyzes the condensation of the acetyl group of acetyl-CoA with 3-methyl-2-oxobutanoate (2-ketoisovalerate) to form 3-carboxy-3-hydroxy-4-methylpentanoate (2-isopropylmalate). In Proteus mirabilis (strain HI4320), this protein is 2-isopropylmalate synthase.